Here is a 931-residue protein sequence, read N- to C-terminus: Bifunctional glutamine synthetase adenylyltransferase/adenylyl-removing enzyme (931 aa).

Residues 1–434 (MTLAPADLPV…STEFAALLAP (434 aa)) form an adenylyl removase region. The interval 441-931 (PDALANYWRS…ACRAAELPFA (491 aa)) is adenylyl transferase.

The protein belongs to the GlnE family. Mg(2+) is required as a cofactor.

It catalyses the reaction [glutamine synthetase]-O(4)-(5'-adenylyl)-L-tyrosine + phosphate = [glutamine synthetase]-L-tyrosine + ADP. The catalysed reaction is [glutamine synthetase]-L-tyrosine + ATP = [glutamine synthetase]-O(4)-(5'-adenylyl)-L-tyrosine + diphosphate. Functionally, involved in the regulation of glutamine synthetase GlnA, a key enzyme in the process to assimilate ammonia. When cellular nitrogen levels are high, the C-terminal adenylyl transferase (AT) inactivates GlnA by covalent transfer of an adenylyl group from ATP to specific tyrosine residue of GlnA, thus reducing its activity. Conversely, when nitrogen levels are low, the N-terminal adenylyl removase (AR) activates GlnA by removing the adenylyl group by phosphorolysis, increasing its activity. The regulatory region of GlnE binds the signal transduction protein PII (GlnB) which indicates the nitrogen status of the cell. The polypeptide is Bifunctional glutamine synthetase adenylyltransferase/adenylyl-removing enzyme (Stenotrophomonas maltophilia (strain K279a)).